A 264-amino-acid chain; its full sequence is Thymidylate synthase (264 aa).

Arg-21 lines the dUMP pocket. Residue His-51 coordinates (6R)-5,10-methylene-5,6,7,8-tetrahydrofolate. 126 to 127 is a binding site for dUMP; sequence RR. Residue Cys-146 is the Nucleophile of the active site. DUMP is bound by residues 166-169, Asn-177, and 207-209; these read RSAD and HIY. A (6R)-5,10-methylene-5,6,7,8-tetrahydrofolate-binding site is contributed by Asp-169. Ala-263 provides a ligand contact to (6R)-5,10-methylene-5,6,7,8-tetrahydrofolate.

The protein belongs to the thymidylate synthase family. Bacterial-type ThyA subfamily. Homodimer.

It is found in the cytoplasm. The enzyme catalyses dUMP + (6R)-5,10-methylene-5,6,7,8-tetrahydrofolate = 7,8-dihydrofolate + dTMP. It functions in the pathway pyrimidine metabolism; dTTP biosynthesis. Catalyzes the reductive methylation of 2'-deoxyuridine-5'-monophosphate (dUMP) to 2'-deoxythymidine-5'-monophosphate (dTMP) while utilizing 5,10-methylenetetrahydrofolate (mTHF) as the methyl donor and reductant in the reaction, yielding dihydrofolate (DHF) as a by-product. This enzymatic reaction provides an intracellular de novo source of dTMP, an essential precursor for DNA biosynthesis. This is Thymidylate synthase from Rhizobium meliloti (strain 1021) (Ensifer meliloti).